The sequence spans 716 residues: Fatty acid oxidation complex subunit alpha (716 aa).

Residues 1 to 189 are enoyl-CoA hydratase/isomerase; that stretch reads MIYQSPTIQV…KVGAIDAVVA (189 aa). Aspartate 296 lines the substrate pocket. Residues 311-716 are 3-hydroxyacyl-CoA dehydrogenase; the sequence is KNIDTAAVLG…AANNGSYYQS (406 aa). NAD(+) is bound by residues methionine 324, aspartate 343, 400–402, lysine 407, and serine 429; that span reads VVE. The active-site For 3-hydroxyacyl-CoA dehydrogenase activity is histidine 450. Asparagine 453 provides a ligand contact to NAD(+). Position 500 (asparagine 500) interacts with substrate.

This sequence in the N-terminal section; belongs to the enoyl-CoA hydratase/isomerase family. It in the C-terminal section; belongs to the 3-hydroxyacyl-CoA dehydrogenase family. In terms of assembly, heterotetramer of two alpha chains (FadB) and two beta chains (FadA).

The catalysed reaction is a (3S)-3-hydroxyacyl-CoA + NAD(+) = a 3-oxoacyl-CoA + NADH + H(+). The enzyme catalyses a (3S)-3-hydroxyacyl-CoA = a (2E)-enoyl-CoA + H2O. It catalyses the reaction a 4-saturated-(3S)-3-hydroxyacyl-CoA = a (3E)-enoyl-CoA + H2O. It carries out the reaction (3S)-3-hydroxybutanoyl-CoA = (3R)-3-hydroxybutanoyl-CoA. The catalysed reaction is a (3Z)-enoyl-CoA = a 4-saturated (2E)-enoyl-CoA. The enzyme catalyses a (3E)-enoyl-CoA = a 4-saturated (2E)-enoyl-CoA. Its pathway is lipid metabolism; fatty acid beta-oxidation. Functionally, involved in the aerobic and anaerobic degradation of long-chain fatty acids via beta-oxidation cycle. Catalyzes the formation of 3-oxoacyl-CoA from enoyl-CoA via L-3-hydroxyacyl-CoA. It can also use D-3-hydroxyacyl-CoA and cis-3-enoyl-CoA as substrate. This Shewanella sediminis (strain HAW-EB3) protein is Fatty acid oxidation complex subunit alpha.